The chain runs to 766 residues: 5-methyltetrahydropteroyltriglutamate--homocysteine methyltransferase (766 aa).

Residues 16-19 (RELK) and K122 each bind 5-methyltetrahydropteroyltri-L-glutamate. L-homocysteine is bound by residues 443 to 445 (IGS) and E496. Residues 443–445 (IGS) and E496 contribute to the L-methionine site. Residues 527–528 (RC) and W573 each bind 5-methyltetrahydropteroyltri-L-glutamate. D611 provides a ligand contact to L-homocysteine. D611 serves as a coordination point for L-methionine. E617 is a 5-methyltetrahydropteroyltri-L-glutamate binding site. Zn(2+) is bound by residues H653, C655, and E677. H706 (proton donor) is an active-site residue. C738 provides a ligand contact to Zn(2+).

Belongs to the vitamin-B12 independent methionine synthase family. Requires Zn(2+) as cofactor.

It catalyses the reaction 5-methyltetrahydropteroyltri-L-glutamate + L-homocysteine = tetrahydropteroyltri-L-glutamate + L-methionine. It functions in the pathway amino-acid biosynthesis; L-methionine biosynthesis via de novo pathway; L-methionine from L-homocysteine (MetE route): step 1/1. Catalyzes the transfer of a methyl group from 5-methyltetrahydrofolate to homocysteine resulting in methionine formation. The chain is 5-methyltetrahydropteroyltriglutamate--homocysteine methyltransferase from Pseudomonas putida (strain W619).